Reading from the N-terminus, the 193-residue chain is Xanthine phosphoribosyltransferase (193 aa).

Residues Leu-20 and Asn-27 each contribute to the xanthine site. 5-phospho-alpha-D-ribose 1-diphosphate is bound at residue 128–132 (ASGGT). Lys-156 serves as a coordination point for xanthine.

Belongs to the purine/pyrimidine phosphoribosyltransferase family. Xpt subfamily. As to quaternary structure, homodimer.

Its subcellular location is the cytoplasm. It catalyses the reaction XMP + diphosphate = xanthine + 5-phospho-alpha-D-ribose 1-diphosphate. Its pathway is purine metabolism; XMP biosynthesis via salvage pathway; XMP from xanthine: step 1/1. Functionally, converts the preformed base xanthine, a product of nucleic acid breakdown, to xanthosine 5'-monophosphate (XMP), so it can be reused for RNA or DNA synthesis. In Deinococcus deserti (strain DSM 17065 / CIP 109153 / LMG 22923 / VCD115), this protein is Xanthine phosphoribosyltransferase.